A 133-amino-acid polypeptide reads, in one-letter code: Probable mitochondrial pyruvate carrier 2 (133 aa).

Transmembrane regions (helical) follow at residues 39-55 (VTNL…IVPI), 73-91 (ASSL…TLIS), and 99-116 (MLAA…YNIY).

Belongs to the mitochondrial pyruvate carrier (MPC) (TC 2.A.105) family.

Its subcellular location is the mitochondrion inner membrane. May mediate the uptake of pyruvate into mitochondria. The chain is Probable mitochondrial pyruvate carrier 2 from Dictyostelium discoideum (Social amoeba).